The sequence spans 279 residues: Undecaprenyl-diphosphatase (279 aa).

8 consecutive transmembrane segments (helical) span residues 2-22 (LFIELLKAIFFGVIEGVTEWL), 44-64 (AFMEMFNIVIQLGAIIAVIVI), 85-105 (WQLWLKVAIACIPSIIIAVPL), 113-133 (FNHMLPIAIALIVYGIAFLWI), 163-183 (VLSIIPGTSRSGATILGAIIL), 188-208 (TVAADFTFFLAIPTMFGYSGL), 225-245 (LLVLLVASLTAFAVSLYVIKL), and 255-275 (FTVFGRYRIVLGSLLIVYSVF).

It belongs to the UppP family.

The protein localises to the cell membrane. The enzyme catalyses di-trans,octa-cis-undecaprenyl diphosphate + H2O = di-trans,octa-cis-undecaprenyl phosphate + phosphate + H(+). Catalyzes the dephosphorylation of undecaprenyl diphosphate (UPP). Confers resistance to bacitracin. The protein is Undecaprenyl-diphosphatase of Streptococcus equi subsp. zooepidemicus (strain MGCS10565).